The sequence spans 237 residues: Phosphatidylserine decarboxylase proenzyme (237 aa).

Ser206 (schiff-base intermediate with substrate; via pyruvic acid) is an active-site residue. Residue Ser206 is modified to Pyruvic acid (Ser); by autocatalysis.

It belongs to the phosphatidylserine decarboxylase family. PSD-A subfamily. In terms of assembly, heterodimer of a large membrane-associated beta subunit and a small pyruvoyl-containing alpha subunit. The cofactor is pyruvate. Is synthesized initially as an inactive proenzyme. Formation of the active enzyme involves a self-maturation process in which the active site pyruvoyl group is generated from an internal serine residue via an autocatalytic post-translational modification. Two non-identical subunits are generated from the proenzyme in this reaction, and the pyruvate is formed at the N-terminus of the alpha chain, which is derived from the carboxyl end of the proenzyme. The post-translation cleavage follows an unusual pathway, termed non-hydrolytic serinolysis, in which the side chain hydroxyl group of the serine supplies its oxygen atom to form the C-terminus of the beta chain, while the remainder of the serine residue undergoes an oxidative deamination to produce ammonia and the pyruvoyl prosthetic group on the alpha chain.

Its subcellular location is the cell membrane. It carries out the reaction a 1,2-diacyl-sn-glycero-3-phospho-L-serine + H(+) = a 1,2-diacyl-sn-glycero-3-phosphoethanolamine + CO2. It participates in phospholipid metabolism; phosphatidylethanolamine biosynthesis; phosphatidylethanolamine from CDP-diacylglycerol: step 2/2. In terms of biological role, catalyzes the formation of phosphatidylethanolamine (PtdEtn) from phosphatidylserine (PtdSer). This chain is Phosphatidylserine decarboxylase proenzyme, found in Rhodococcus erythropolis (strain PR4 / NBRC 100887).